Here is a 499-residue protein sequence, read N- to C-terminus: Protein phosphatase PP2A 55 kDa regulatory subunit (499 aa).

Residues 1-30 (MGRWGRQSPVLEPPDPQMQTTPPPPTLPPR) form a disordered region. Positions 11–28 (LEPPDPQMQTTPPPPTLP) are enriched in pro residues. WD repeat units follow at residues 79–118 (TDAD…KAAN), 144–185 (EIEE…KSFG), 228–266 (AHTY…QSYN), 277–317 (ELTE…LCDR), 336–374 (EIIS…KPIE), 391–432 (ENDC…DVTL), and 467–498 (DFNK…FQDK).

It belongs to the phosphatase 2A regulatory subunit B family. PP2A exists in several trimeric forms, all of which consist of a core composed of a catalytic subunit associated with a 65 kDa regulatory subunit (PR65) (subunit A). The core complex associates with a third, variable subunit (subunit B), which confers distinct properties to the holoenzyme.

Its function is as follows. Could perform a substrate recognition function or could be responsible for targeting the enzyme complex to the appropriate subcellular compartment. This chain is Protein phosphatase PP2A 55 kDa regulatory subunit (tws), found in Drosophila melanogaster (Fruit fly).